Reading from the N-terminus, the 243-residue chain is MSRPVRNRKVVDYSQFQESDDADEDYGRDSGPPAKKIRSSPREAKNKRRSGKNSQEDSEDSEEKDVKTKKDDSHSAEDSEDEKEDHKNVRQQRQAASKAASKQREMLMEDVGSEEEQEEEDEAPFQEKDSGSDEDFLVEDDDDSDYGSSKKKNKKMVKKSKPERKEKKMPKPRLKATVTPSPVKGKGKVGRPTASKASKEKTPSPKEEDEEPESPLEKKASSSPPPEKSGDEGSEDDAQSGED.

Residues 1–243 form a disordered region; the sequence is MSRPVRNRKV…SEDDAQSGED (243 aa). Residue Y13 is modified to Phosphotyrosine. Phosphoserine occurs at positions 14 and 19. Position 26 is a phosphotyrosine (Y26). Positions 35 to 51 are enriched in basic residues; that stretch reads KKIRSSPREAKNKRRSG. A phosphoserine mark is found at S54, S58, S61, S73, S75, and S79. The segment covering 64–77 has biased composition (basic and acidic residues); sequence KDVKTKKDDSHSAE. Residues 91-100 show a composition bias toward low complexity; that stretch reads QQRQAASKAA. Positions 111-124 are enriched in acidic residues; it reads VGSEEEQEEEDEAP. A phosphoserine mark is found at S113, S130, S132, and S144. Acidic residues predominate over residues 132 to 145; that stretch reads SDEDFLVEDDDDSD. Basic residues predominate over residues 149–174; it reads SKKKNKKMVKKSKPERKEKKMPKPRL. T179 carries the post-translational modification Phosphothreonine. Position 181 is a phosphoserine (S181). Residues 197–206 show a composition bias toward basic and acidic residues; it reads ASKEKTPSPK. T202 bears the Phosphothreonine mark. Phosphoserine is present on residues S204, S214, S223, S229, S234, and S240. Residues 232 to 243 show a composition bias toward acidic residues; it reads EGSEDDAQSGED.

In terms of assembly, does not interact with RAD51. Post-translationally, phosphorylated in an ATM-dependent manner in response to DNA damage. Phosphorylated by CDK1 and casein kinase.

The protein resides in the nucleus. It is found in the chromosome. In terms of biological role, chromatin-associated protein involved in DNA repair by promoting homologous recombination (HR). Binds double-stranded DNA (dsDNA) and secondary DNA structures, such as D-loop structures, but with less affinity than RAD51AP1. This Bos taurus (Bovine) protein is Nuclear ubiquitous casein and cyclin-dependent kinase substrate 1 (NUCKS1).